The chain runs to 1077 residues: MLLWKAAATKLRGVKGMRGFRDKIKGTKTKLLRRDSKDSTEEASAVRPSKTAKGGPGTGTETGSGGSGEGSWGRKSKRHSLIGRDPSRSDQSLVAPSDRTFDTTTDLDTTSISGNGNANPTASANGDIVIEGGTAPKRRSAGKEFDNLEDGTGLQPQLLNTTAKPLELSPAPPLTDTTGSIESPSTAAPDKGSFNCELPVVLSQKDSLKLNKNGILVGVESRPPSQIPLAENENLQPQPQPQPPQSNAAATAASAASVSALIQPSEGTPSKASTTGQSSTLSLPSDKTVILESTTPAVPSTSTPSTNIAATTTTAAITTTSVPAPTTTISRTPSRKLSDRSSDLSINTTNLPPPFTRPYRLSQFPTDSSGLRADTDSSALSQLQRSSSRASLGIHEPIAPETVEPPFRDKRESSFSHGPETLVYTGPLLHNPPEPASVVPVAAEVAQTLHTVSETGTFQPTELARNESVVSRNESVKSRILSSSGSRRKHPLSFSRRQSLIHPSDTGLLRYLLEQESASPTTYGREGGSNIQSVAGLMPHSENQLRTRKVWVKRPGGSPTQVIVTEDDFVDTVRDLCLRKYTNALGRHYDSPDLMIRISPPLKPQSARARQMGNMQTHTDRLLNPDEVLCQLLDDYYPNGQTSEDALIVEVPQQQRSRTPRPSPGPHSMSYAYGQTVHDLQLPGEDYFTPVGTIVPSIPHSQSGTVRSTHNLPANPSSLSNYIANSPPPSSPGHRSLKRPGPVRMTTGSPVGSTTSSAPGGGGGGVMLIPRAGGVVPDRIRATNVEAPTSPSVPPQMVALPSSPGIIKPIPQKPASPGVLPAVTSPPAITRPPPKSKEITASIGTLDGQVPSINVLIVEDNIINLRLLEAFMKRLKVRWATAMNGREAVTKWRTGGFQLVLMDIQLPIMNGLDATKEIRRLERLNGIGSFSSSPSGPEDELSSADKLDKSLVFKGSVIIVALTASSLRSDRDEALAVGCNDFLTKPVNFTFLERKVMEWGCMQALIDFEGWRKWKDLASKPGASGGKTSKGGRGKASASTSAAAKKGKESSISVLDNASSSSSTPQPTQSVPIAGQS.

A Response regulatory domain is found at N854–G1000. D903 bears the 4-aspartylphosphate mark.

It belongs to the SSK1 family.

It localises to the cytoplasm. Its function is as follows. Two-domain response regulator protein in the two-component signal transduction system of the HOG1 pathway. Involved in multi-stress responses and is essential for conidiation, secondary metabolism, autophagy and endocyrosis. In addition, regulates mycelial growth, cell nucleus development, septum formation, and organelle development. Also regulates trap formation and thus plays a crucial role in pathogenicity. In Arthrobotrys oligospora (strain ATCC 24927 / CBS 115.81 / DSM 1491) (Nematode-trapping fungus), this protein is Response regulator SSK1.